Reading from the N-terminus, the 256-residue chain is Small ribosomal subunit protein eS1 (256 aa).

Ala2 carries the post-translational modification N-acetylalanine; partial.

This sequence belongs to the eukaryotic ribosomal protein eS1 family. Component of the small ribosomal subunit. Mature ribosomes consist of a small (40S) and a large (60S) subunit. The 40S subunit contains about 33 different proteins and 1 molecule of RNA (18S). The 60S subunit contains about 49 different proteins and 3 molecules of RNA (25S, 5.8S and 5S).

Its subcellular location is the cytoplasm. This chain is Small ribosomal subunit protein eS1, found in Komagataella phaffii (strain GS115 / ATCC 20864) (Yeast).